A 263-amino-acid chain; its full sequence is Microtubule-associated protein RP/EB family member 1 (263 aa).

One can recognise a Calponin-homology (CH) domain in the interval asparagine 14–aspartate 116. The EB1 C-terminal domain maps to lysine 180–isoleucine 250.

Belongs to the MAPRE family.

It localises to the cytoplasm. Its subcellular location is the cytoskeleton. It is found in the microtubule organizing center. The protein localises to the centrosome. The protein resides in the golgi apparatus. It localises to the spindle. Its subcellular location is the spindle pole. Functionally, plus-end tracking protein (+TIP) that binds to the plus-end of microtubules and regulates the dynamics of the microtubule cytoskeleton. Promotes cytoplasmic microtubule nucleation and elongation. Involved in mitotic spindle positioning by stabilizing microtubules and promoting dynamic connection between astral microtubules and the cortex during mitotic chromosome segregation. In Coturnix coturnix (Common quail), this protein is Microtubule-associated protein RP/EB family member 1 (MAPRE1).